The primary structure comprises 315 residues: Spermidine synthase 1 (315 aa).

The 238-residue stretch at 25-262 (PGWFSEISPL…GMIGFMLCST (238 aa)) folds into the PABS domain. Q56 lines the S-adenosyl 3-(methylsulfanyl)propylamine pocket. Y86 is a binding site for putrescine. Residues Q87, D111, E131, 162 to 163 (DG), and D181 contribute to the S-adenosyl 3-(methylsulfanyl)propylamine site. D181 serves as the catalytic Proton acceptor. Putrescine-binding positions include 181 to 184 (DSSD) and Y250.

Belongs to the spermidine/spermine synthase family.

The catalysed reaction is S-adenosyl 3-(methylsulfanyl)propylamine + putrescine = S-methyl-5'-thioadenosine + spermidine + H(+). It functions in the pathway amine and polyamine biosynthesis; spermidine biosynthesis; spermidine from putrescine: step 1/1. This chain is Spermidine synthase 1, found in Hyoscyamus niger (Black henbane).